We begin with the raw amino-acid sequence, 433 residues long: 23S rRNA (uracil(1939)-C(5))-methyltransferase RlmD (433 aa).

Positions Arg-10 to Arg-68 constitute a TRAM domain. Interaction with RNA regions lie at residues Asp-23 to Phe-40 and Lys-58 to Arg-63. [4Fe-4S] cluster contacts are provided by Cys-81, Cys-87, Cys-90, and Cys-162. Gln-265, Phe-294, Asn-299, Glu-315, Asn-342, and Asp-363 together coordinate S-adenosyl-L-methionine. The Nucleophile role is filled by Cys-389.

The protein belongs to the class I-like SAM-binding methyltransferase superfamily. RNA M5U methyltransferase family. RlmD subfamily.

The catalysed reaction is uridine(1939) in 23S rRNA + S-adenosyl-L-methionine = 5-methyluridine(1939) in 23S rRNA + S-adenosyl-L-homocysteine + H(+). In terms of biological role, catalyzes the formation of 5-methyl-uridine at position 1939 (m5U1939) in 23S rRNA. This is 23S rRNA (uracil(1939)-C(5))-methyltransferase RlmD from Escherichia coli (strain K12).